We begin with the raw amino-acid sequence, 213 residues long: Protein SRN2 (213 aa).

Residues 128 to 213 (SKYVASWQDY…TWDKQGNLKY (86 aa)) form the VPS37 C-terminal domain.

It belongs to the VPS37 family. In terms of assembly, component of the ESCRT-I complex (endosomal sorting complex required for transport I) which consists of STP22, VPS28, SRN2 and MVB12 in a 1:1:1:1 stoichiometry. Interacts with STP22 and MVB12.

It is found in the cytoplasm. The protein localises to the endosome. It localises to the late endosome membrane. Component of the ESCRT-I complex, a regulator of vesicular trafficking process. Required for normal endocytic and biosynthetic traffic to the yeast vacuole. The protein is Protein SRN2 (SRN2) of Saccharomyces cerevisiae (strain ATCC 204508 / S288c) (Baker's yeast).